Here is a 353-residue protein sequence, read N- to C-terminus: D-alanine--D-alanine ligase (353 aa).

In terms of domain architecture, ATP-grasp spans 141-349 (KAAFAAAGLP…LEELVSQLVI (209 aa)). 176–231 (EAKLKYPCFVKPANLGSSVGISKAQNRNELLIGLDKAASLDRRIVVEQGVSARELE) contacts ATP. The Mg(2+) site is built by D302, E316, and N318.

It belongs to the D-alanine--D-alanine ligase family. It depends on Mg(2+) as a cofactor. The cofactor is Mn(2+).

Its subcellular location is the cytoplasm. The catalysed reaction is 2 D-alanine + ATP = D-alanyl-D-alanine + ADP + phosphate + H(+). It participates in cell wall biogenesis; peptidoglycan biosynthesis. Cell wall formation. This chain is D-alanine--D-alanine ligase, found in Prochlorococcus marinus (strain MIT 9303).